A 640-amino-acid chain; its full sequence is Calpain-5 (640 aa).

The region spanning 26–343 (LFEDPHFPAS…FTDIIKCRLI (318 aa)) is the Calpain catalytic domain. Active-site residues include Cys-81, His-252, and Asn-284. The domain III stretch occupies residues 344–496 (NTSYLSIHKT…VFTDVPSNCR (153 aa)). The C2 domain occupies 499-617 (RLDEPPRTCW…HSLHLQDRSG (119 aa)).

It belongs to the peptidase C2 family.

Its function is as follows. Calcium-regulated non-lysosomal thiol-protease. This is Calpain-5 (Capn5) from Rattus norvegicus (Rat).